The primary structure comprises 93 residues: Cell division topological specificity factor (93 aa).

It belongs to the MinE family.

Functionally, prevents the cell division inhibition by proteins MinC and MinD at internal division sites while permitting inhibition at polar sites. This ensures cell division at the proper site by restricting the formation of a division septum at the midpoint of the long axis of the cell. This Alkaliphilus oremlandii (strain OhILAs) (Clostridium oremlandii (strain OhILAs)) protein is Cell division topological specificity factor.